The following is an 872-amino-acid chain: Valine--tRNA ligase (872 aa).

The 'HIGH' region signature appears at 49-59 (PNVTGILHIGH). A 'KMSKS' region motif is present at residues 531-535 (KMSKS). Lys534 is a binding site for ATP. The stretch at 810–871 (PLIARLKKQL…IQQELDLLEQ (62 aa)) forms a coiled coil.

Belongs to the class-I aminoacyl-tRNA synthetase family. ValS type 1 subfamily. Monomer.

It is found in the cytoplasm. The enzyme catalyses tRNA(Val) + L-valine + ATP = L-valyl-tRNA(Val) + AMP + diphosphate. Catalyzes the attachment of valine to tRNA(Val). As ValRS can inadvertently accommodate and process structurally similar amino acids such as threonine, to avoid such errors, it has a 'posttransfer' editing activity that hydrolyzes mischarged Thr-tRNA(Val) in a tRNA-dependent manner. The polypeptide is Valine--tRNA ligase (Helicobacter pylori (strain J99 / ATCC 700824) (Campylobacter pylori J99)).